The sequence spans 184 residues: Large ribosomal subunit protein uL5 (184 aa).

The protein belongs to the universal ribosomal protein uL5 family. Part of the 50S ribosomal subunit; part of the 5S rRNA/L5/L18/L25 subcomplex. Contacts the 5S rRNA and the P site tRNA. Forms a bridge to the 30S subunit in the 70S ribosome.

This is one of the proteins that bind and probably mediate the attachment of the 5S RNA into the large ribosomal subunit, where it forms part of the central protuberance. In the 70S ribosome it contacts protein S13 of the 30S subunit (bridge B1b), connecting the 2 subunits; this bridge is implicated in subunit movement. Contacts the P site tRNA; the 5S rRNA and some of its associated proteins might help stabilize positioning of ribosome-bound tRNAs. This Thermotoga maritima (strain ATCC 43589 / DSM 3109 / JCM 10099 / NBRC 100826 / MSB8) protein is Large ribosomal subunit protein uL5.